We begin with the raw amino-acid sequence, 179 residues long: Cytoglobin-2 (179 aa).

Acidic residues predominate over residues 1–11 (MEKEREDEETE). A disordered region spans residues 1-20 (MEKEREDEETEGRERPEPLT). The region spanning 18 to 167 (PLTDVERGII…LYWHITGAYT (150 aa)) is the Globin domain. Heme b is bound by residues histidine 81 and histidine 113.

Belongs to the globin family. As to quaternary structure, monomeric. In terms of tissue distribution, expressed in all tissues examined, with highest levels in brain and eye, and considerably lower levels in skin, gut, heart, gill, liver and muscle.

It is found in the cytoplasm. Its subcellular location is the nucleus. The catalysed reaction is Fe(II)-heme b-[protein] + nitric oxide + O2 = Fe(III)-heme b-[protein] + nitrate. It carries out the reaction Fe(III)-heme b-[protein] + nitric oxide + H2O = Fe(II)-heme b-[protein] + nitrite + 2 H(+). The enzyme catalyses 2 superoxide + 2 H(+) = H2O2 + O2. It catalyses the reaction H2O2 + AH2 = A + 2 H2O. In terms of biological role, probable multifunctional globin with a hexacoordinated heme iron required for the catalysis of various reactions depending on redox condition of the cell as well as oxygen availability. Has a nitric oxide dioxygenase (NOD) activity and is most probably involved in cell-mediated and oxygen-dependent nitric oxide consumption. Under normoxic conditions functions as a nitric oxide dioxygenase (NOD) but under hypoxic conditions the globin may switch its function to that of a nitrite (NO2) reductase (NiR), generating nitric oxide. Could also have peroxidase and superoxide dismutase activities, detoxifying reactive oxygen species and protecting cells against oxidative stress. Also binds dioxygen with low affinity and could function as an oxygen sensor but has probably no function as a respiratory oxygen carrier. The protein is Cytoglobin-2 of Danio rerio (Zebrafish).